A 310-amino-acid polypeptide reads, in one-letter code: Cytosolic Fe-S cluster assembly factor Nubp1 homolog (310 aa).

C9, C23, C26, and C32 together coordinate [4Fe-4S] cluster. 63–70 serves as a coordination point for ATP; that stretch reads GKGGVGKS. The [4Fe-4S] cluster site is built by C240 and C243.

Belongs to the Mrp/NBP35 ATP-binding proteins family. NUBP1/NBP35 subfamily. As to quaternary structure, heterotetramer of 2 Nubp1 and 2 Nubp2 chains. Requires [4Fe-4S] cluster as cofactor.

It localises to the cytoplasm. Component of the cytosolic iron-sulfur (Fe/S) protein assembly (CIA) machinery. Required for maturation of extramitochondrial Fe-S proteins. The Nubp1-Nubp2 heterotetramer forms a Fe-S scaffold complex, mediating the de novo assembly of an Fe-S cluster and its transfer to target apoproteins. This chain is Cytosolic Fe-S cluster assembly factor Nubp1 homolog, found in Drosophila mojavensis (Fruit fly).